Consider the following 396-residue polypeptide: Pyruvate synthase subunit PorA (396 aa).

In terms of assembly, heterotetramer of one alpha, one beta, one delta and one gamma chain.

The enzyme catalyses 2 oxidized [2Fe-2S]-[ferredoxin] + pyruvate + CoA = 2 reduced [2Fe-2S]-[ferredoxin] + acetyl-CoA + CO2 + H(+). This Pyrococcus furiosus (strain ATCC 43587 / DSM 3638 / JCM 8422 / Vc1) protein is Pyruvate synthase subunit PorA (porA).